Reading from the N-terminus, the 908-residue chain is 26S proteasome non-ATPase regulatory subunit 2 (908 aa).

The residue at position 1 (Met-1) is an N-acetylmethionine. Residues 1–52 are disordered; the sequence is MEEGGRDKAPLQPQQPPATSPGSGDEKPSGKERRDAGDKDKEQELSEEDKQL. Positions 24-52 are enriched in basic and acidic residues; that stretch reads GDEKPSGKERRDAGDKDKEQELSEEDKQL. 2 positions are modified to phosphoserine: Ser-29 and Ser-147. Phosphotyrosine is present on Tyr-194. Residues Ser-361 and Ser-363 each carry the phosphoserine modification. PC repeat units follow at residues 409 to 442, 443 to 479, 480 to 514, 517 to 551, and 560 to 589; these read SAAA…YIKS, GALL…TMRL, GSIF…SMEV, VTAL…TELK, and LGLG…PFRS. An N6-acetyllysine modification is found at Lys-551. Positions 623–643 are enriched in basic and acidic residues; the sequence is KEKEEDKDKKEKKDKDKKEAP. The disordered stretch occupies residues 623–645; the sequence is KEKEEDKDKKEKKDKDKKEAPAD. 2 PC repeats span residues 692-723 and 742-757; these read LALA…EVSY and AAML…KDPN. The segment at 708–903 is required for interaction with UBLCP1; sequence DTLSKFSHDA…LEGFVILRKN (196 aa).

This sequence belongs to the proteasome subunit S2 family. In terms of assembly, component of the 19S proteasome regulatory particle complex. The 26S proteasome consists of a 20S core particle (CP) and two 19S regulatory subunits (RP). The regulatory particle is made of a lid composed of 9 subunits, a base containing 6 ATPases and few additional components including PSMD2. Interacts with RPGRIP1L. Interacts with CRY1 in a KDM8-dependent manner. Interacts (via C-terminus) with phosphatase UBLCP1 (via ubiquitin-like domain); the interaction recruits UBLCP1 to the 19S regulatory particle where it dephosphorylates 19S subunit PSMC2/RPT1 which impairs PSMC2 ATPase activity and disrupts 26S proteasome assembly.

Functionally, component of the 26S proteasome, a multiprotein complex involved in the ATP-dependent degradation of ubiquitinated proteins. This complex plays a key role in the maintenance of protein homeostasis by removing misfolded or damaged proteins, which could impair cellular functions, and by removing proteins whose functions are no longer required. Therefore, the proteasome participates in numerous cellular processes, including cell cycle progression, apoptosis, or DNA damage repair. In terms of biological role, binds to the intracellular domain of tumor necrosis factor type 1 receptor. The binding domain of TRAP1 and TRAP2 resides outside the death domain of TNFR1. This is 26S proteasome non-ATPase regulatory subunit 2 (PSMD2) from Bos taurus (Bovine).